The sequence spans 423 residues: Mannitol-1-phosphate 5-dehydrogenase (423 aa).

Positions 40, 69, and 70 each coordinate Zn(2+).

Belongs to the zinc-containing alcohol dehydrogenase family. The cofactor is Zn(2+).

The catalysed reaction is D-mannitol 1-phosphate + NAD(+) = beta-D-fructose 6-phosphate + NADH + H(+). In terms of biological role, seems to be involved in mannitol utilization. Complements an E.coli mtlD deletion mutant. The protein is Mannitol-1-phosphate 5-dehydrogenase of Aliivibrio fischeri (strain ATCC 700601 / ES114) (Vibrio fischeri).